The chain runs to 195 residues: Fe/S biogenesis protein NfuA (195 aa).

[4Fe-4S] cluster contacts are provided by C152 and C155.

The protein belongs to the NfuA family. Homodimer. Requires [4Fe-4S] cluster as cofactor.

Involved in iron-sulfur cluster biogenesis. Binds a 4Fe-4S cluster, can transfer this cluster to apoproteins, and thereby intervenes in the maturation of Fe/S proteins. Could also act as a scaffold/chaperone for damaged Fe/S proteins. This chain is Fe/S biogenesis protein NfuA, found in Vibrio cholerae serotype O1 (strain ATCC 39315 / El Tor Inaba N16961).